The chain runs to 970 residues: MPEQNSIRIRGARQHNLKNVNLDLPRDRLIVFTGVSGSGKSSLAFDTIFAEGQRRYVESLSAYARQFLGQLDKPDVDSIEGLSPAISIDQKSTSHNPRSTVGTVTEIYDYLRLLFGRAGSPHCPHCQRNIAPQTIDQMCDRVMELPDRTKFQILAPVVKGKKGTHVQLLSSLVSQGFVRVRINGEVRELSDNIELKKNQAHTIEIVIDRLIKKEGLQERLVDSLSTCLKQAEGTAIIDILDKPTLAVLDGGKKDDKEALKAAENGQAYHAELPKEIIFSENFACPEHGAVMDELSPRLFSFNSPYGACPDCHGIGFVRSFCPDLVIPDPEKPVYVAIAPWSEKDNSYYLSLLYSLGQHFDFQLQTPWKKLTKEQKEIILYGTEEEIWFEGESRYRNKQGYYRRFAGALNILQKNYDETNSDAIKQKLEKYIINQPCHTCGGKRLKPEALAVKLGQYNINNLTSVPIRQTLERIENLELTSRQAMIGELALKEIKARLQFLLDVGLDYLTLDRAAMTLSGGEAQRIRLATQIGSGLTGVLYVLDEPSIGLHQRDNNRLLATLTKLRDLGNTLIVVEHDEDTIRHADYIVDIGPKAGIHGGEIVCQGDFQTLLKNQRSLTGAYLSGREAIATPEERRNGNGAKLTLQGCCHNNLRNIDVTIPLGKLVCVTGVSGSGKSTLVNELLHPALQHYLSRQVAFPKNLGEITGLQAIDKVIVIDQSPIGRTPRSNPATYTGIFDSIREIFTQTIEAKARGYKPGQFSFNVKGGRCEACAGQGVNVIEMNFLPDVYVQCDVCKGARYNRETLQVKYKGHSIADVLAMTTEEALTVFENIPRAVNRLQTLVDVGLGYIKLGQPAPTLSGGEAQRVKLASELSRRATGKTLYLIDEPTTGLSFYDVHHLLNVLQRLVDKGNSVLVIEHNLDVIRCSDWIIDLGPEGGDRGGKIMVAGTPETVAQHPSSYTGKYLAKVLQS.

Gly34–Ser41 serves as a coordination point for ATP. A C4-type zinc finger spans residues Cys284–Cys311. ABC transporter domains lie at Trp340–Leu617 and Gly637–Ala965. Gly669 to Ser676 serves as a coordination point for ATP. Residues Cys768 to Cys794 form a C4-type zinc finger.

Belongs to the ABC transporter superfamily. UvrA family. Forms a heterotetramer with UvrB during the search for lesions.

It is found in the cytoplasm. Its function is as follows. The UvrABC repair system catalyzes the recognition and processing of DNA lesions. UvrA is an ATPase and a DNA-binding protein. A damage recognition complex composed of 2 UvrA and 2 UvrB subunits scans DNA for abnormalities. When the presence of a lesion has been verified by UvrB, the UvrA molecules dissociate. This is UvrABC system protein A from Synechocystis sp. (strain ATCC 27184 / PCC 6803 / Kazusa).